A 255-amino-acid chain; its full sequence is tRNA (guanine-N(1)-)-methyltransferase (255 aa).

S-adenosyl-L-methionine-binding positions include glycine 113 and 133 to 138; that span reads IGDYVL.

This sequence belongs to the RNA methyltransferase TrmD family. In terms of assembly, homodimer.

Its subcellular location is the cytoplasm. The enzyme catalyses guanosine(37) in tRNA + S-adenosyl-L-methionine = N(1)-methylguanosine(37) in tRNA + S-adenosyl-L-homocysteine + H(+). Its function is as follows. Specifically methylates guanosine-37 in various tRNAs. This Escherichia coli O81 (strain ED1a) protein is tRNA (guanine-N(1)-)-methyltransferase.